We begin with the raw amino-acid sequence, 89 residues long: Small ribosomal subunit protein uS15 (89 aa).

The protein belongs to the universal ribosomal protein uS15 family. In terms of assembly, part of the 30S ribosomal subunit. Forms a bridge to the 50S subunit in the 70S ribosome, contacting the 23S rRNA.

One of the primary rRNA binding proteins, it binds directly to 16S rRNA where it helps nucleate assembly of the platform of the 30S subunit by binding and bridging several RNA helices of the 16S rRNA. In terms of biological role, forms an intersubunit bridge (bridge B4) with the 23S rRNA of the 50S subunit in the ribosome. In Caulobacter vibrioides (strain NA1000 / CB15N) (Caulobacter crescentus), this protein is Small ribosomal subunit protein uS15.